The primary structure comprises 444 residues: Trigger factor (444 aa).

One can recognise a PPIase FKBP-type domain in the interval 185–270; the sequence is GDKLIIDFEG…VNEIQIAKDF (86 aa).

It belongs to the FKBP-type PPIase family. Tig subfamily.

The protein localises to the cytoplasm. The catalysed reaction is [protein]-peptidylproline (omega=180) = [protein]-peptidylproline (omega=0). Involved in protein export. Acts as a chaperone by maintaining the newly synthesized protein in an open conformation. Functions as a peptidyl-prolyl cis-trans isomerase. The chain is Trigger factor from Wolbachia pipientis wMel.